Here is a 140-residue protein sequence, read N- to C-terminus: Nucleoside diphosphate kinase (140 aa).

Residues lysine 11, phenylalanine 59, arginine 87, threonine 93, arginine 104, and asparagine 114 each contribute to the ATP site. The Pros-phosphohistidine intermediate role is filled by histidine 117.

It belongs to the NDK family. Homotetramer. It depends on Mg(2+) as a cofactor.

It localises to the cytoplasm. The catalysed reaction is a 2'-deoxyribonucleoside 5'-diphosphate + ATP = a 2'-deoxyribonucleoside 5'-triphosphate + ADP. The enzyme catalyses a ribonucleoside 5'-diphosphate + ATP = a ribonucleoside 5'-triphosphate + ADP. In terms of biological role, major role in the synthesis of nucleoside triphosphates other than ATP. The ATP gamma phosphate is transferred to the NDP beta phosphate via a ping-pong mechanism, using a phosphorylated active-site intermediate. The protein is Nucleoside diphosphate kinase of Rhizobium etli (strain ATCC 51251 / DSM 11541 / JCM 21823 / NBRC 15573 / CFN 42).